Reading from the N-terminus, the 510-residue chain is uncharacterized protein (510 aa).

4 disordered regions span residues 1–154 (MGSP…ATFL), 208–227 (DGNH…GDLA), 234–276 (TRES…QGIL), and 368–480 (NFYT…GCPR). Serine 43 is subject to Phosphoserine. Positions 50-60 (PLVSQQDTSEA) are enriched in polar residues. A compositionally biased stretch (basic and acidic residues) spans 78–92 (EEERLGSPEDEKMDG). Serine 84 bears the Phosphoserine mark. Polar residues-rich tracts occupy residues 97-109 (SQPS…QVAN) and 118-135 (QPSS…SNRR). Residue serine 120 is modified to Phosphoserine. Residues 139 to 151 (ASGSEEAKAASAA) are compositionally biased toward low complexity. Positions 243 to 255 (SSLLTTTRGLTSG) are enriched in low complexity. A compositionally biased stretch (basic and acidic residues) spans 379 to 395 (RTKELQLVAKEDTDSTR). Over residues 414–441 (SVHQEFSSGDINTRSLQDPGNSQSSGLS) the composition is skewed to polar residues.

This is an uncharacterized protein from Rattus norvegicus (Rat).